The sequence spans 431 residues: MANVVVVGAQWGDEGKGKIVDWLSIEADIVVRFQGGHNAGHTLVIGNQVYKLALLPSGIVRLGKLSVIGNGVVVDPQHLVEEIAKLAAQGIEITPDNLKIAENVPLILGLHRELDAHRESSTVEGVKIGTTKRGIGPAYEDKVGRRAIRLMDLAEPDTLDEKIVRLLAHHEPLRRGLGLEPISAGAIRAELESLAPKILPFMDATWDLLENARRAGKRILFEGAQGALLDIDHGTYPFVTSSNTVAANAATGSGLGPKAIGYVLGIAKAYTTRVGGGPFPTELLDETGQLIGDRGHEYGVNTGRRRRCGWFDAVLVRQTVKTCGIDGIALTKLDILDGFKEIKVCVGYDLDGRRIDRLPASQSAQARVKPIYETIDGWEGTTAGARSWADLPAQAIKYVRRIEELIEAPVALLSTSPERADTILVHDPFRD.

Residues glycine 12–lysine 18 and glycine 40–threonine 42 contribute to the GTP site. Aspartate 13 functions as the Proton acceptor in the catalytic mechanism. Residues aspartate 13 and glycine 40 each coordinate Mg(2+). IMP is bound by residues aspartate 13–lysine 16, asparagine 38–histidine 41, threonine 131, arginine 145, glutamine 225, threonine 240, and arginine 304. Residue histidine 41 is the Proton donor of the active site. Substrate is bound at residue valine 300 to arginine 306. Residues arginine 306, lysine 332–aspartate 334, and serine 414–serine 416 contribute to the GTP site.

It belongs to the adenylosuccinate synthetase family. Homodimer. The cofactor is Mg(2+).

It is found in the cytoplasm. It catalyses the reaction IMP + L-aspartate + GTP = N(6)-(1,2-dicarboxyethyl)-AMP + GDP + phosphate + 2 H(+). It participates in purine metabolism; AMP biosynthesis via de novo pathway; AMP from IMP: step 1/2. In terms of biological role, plays an important role in the de novo pathway of purine nucleotide biosynthesis. Catalyzes the first committed step in the biosynthesis of AMP from IMP. The polypeptide is Adenylosuccinate synthetase (Beijerinckia indica subsp. indica (strain ATCC 9039 / DSM 1715 / NCIMB 8712)).